Consider the following 121-residue polypeptide: Large ribosomal subunit protein bL19 (121 aa).

The protein belongs to the bacterial ribosomal protein bL19 family.

Its function is as follows. This protein is located at the 30S-50S ribosomal subunit interface and may play a role in the structure and function of the aminoacyl-tRNA binding site. This chain is Large ribosomal subunit protein bL19, found in Neisseria meningitidis serogroup C (strain 053442).